The primary structure comprises 551 residues: Mesoderm induction early response protein 3 (551 aa).

Low complexity predominate over residues methionine 1–serine 16. 2 disordered regions span residues methionine 1–glycine 62 and leucine 113–proline 169. The segment covering serine 17–glutamate 36 has biased composition (basic and acidic residues). Phosphoserine occurs at positions 52, 53, and 114. A compositionally biased stretch (polar residues) spans glutamine 121–histidine 134. Residues lysine 154 to threonine 163 show a composition bias toward acidic residues. At serine 156 the chain carries Phosphoserine. Threonine 163 carries the post-translational modification Phosphothreonine. A phosphoserine mark is found at serine 165 and serine 168. The ELM2 domain occupies arginine 174–glycine 273. Residues glutamate 278–arginine 330 enclose the SANT domain.

It localises to the nucleus. In terms of biological role, transcriptional repressor. This Mus musculus (Mouse) protein is Mesoderm induction early response protein 3 (Mier3).